The following is a 244-amino-acid chain: Phosphoadenosine 5'-phosphosulfate reductase (244 aa).

Residue C239 is the Nucleophile; cysteine thiosulfonate intermediate of the active site.

The protein belongs to the PAPS reductase family. CysH subfamily.

Its subcellular location is the cytoplasm. The enzyme catalyses [thioredoxin]-disulfide + sulfite + adenosine 3',5'-bisphosphate + 2 H(+) = [thioredoxin]-dithiol + 3'-phosphoadenylyl sulfate. It participates in sulfur metabolism; hydrogen sulfide biosynthesis; sulfite from sulfate: step 3/3. In terms of biological role, catalyzes the formation of sulfite from phosphoadenosine 5'-phosphosulfate (PAPS) using thioredoxin as an electron donor. The polypeptide is Phosphoadenosine 5'-phosphosulfate reductase (Shigella flexneri serotype 5b (strain 8401)).